A 357-amino-acid chain; its full sequence is 4-hydroxymandelate synthase (357 aa).

VOC domains are found at residues Glu-5 to Arg-129 and Gly-158 to Ala-309. His-161 lines the Fe cation pocket. Substrate contacts are provided by His-161, Ser-201, Thr-214, His-241, and Gln-305. His-241 is a binding site for Fe cation. Glu-320 provides a ligand contact to Fe cation.

Belongs to the 4HPPD family. Monomer. Requires Fe cation as cofactor.

The catalysed reaction is 3-(4-hydroxyphenyl)pyruvate + O2 = (S)-4-hydroxymandelate + CO2. It functions in the pathway antibiotic biosynthesis; vancomycin biosynthesis. In terms of biological role, required to synthesize hydroxyphenylglycine, a recurring skeletal component of nonproteinogenic macrocyclic peptide antibiotics such as vancomycin. Catalyzes the conversion of p-hydroxyphenylpyruvate to p-hydroxymandelate. The decarboxylation and hydroxylation activities of HmaS show novel and distinct regioselectivity, compared to all other known p-hydroxyphenylpyruvate dioxygenases, by hydroxylating the benzylic position of the substrate instead of the phenyl ring. The chain is 4-hydroxymandelate synthase from Amycolatopsis orientalis (Nocardia orientalis).